The primary structure comprises 383 residues: Succinyl-diaminopimelate desuccinylase (383 aa).

Histidine 74 provides a ligand contact to Zn(2+). Residue aspartate 76 is part of the active site. Aspartate 107 contributes to the Zn(2+) binding site. Glutamate 141 functions as the Proton acceptor in the catalytic mechanism. The Zn(2+) site is built by glutamate 142, glutamate 170, and histidine 356.

This sequence belongs to the peptidase M20A family. DapE subfamily. Homodimer. The cofactor is Zn(2+). Co(2+) is required as a cofactor.

The enzyme catalyses N-succinyl-(2S,6S)-2,6-diaminopimelate + H2O = (2S,6S)-2,6-diaminopimelate + succinate. Its pathway is amino-acid biosynthesis; L-lysine biosynthesis via DAP pathway; LL-2,6-diaminopimelate from (S)-tetrahydrodipicolinate (succinylase route): step 3/3. Functionally, catalyzes the hydrolysis of N-succinyl-L,L-diaminopimelic acid (SDAP), forming succinate and LL-2,6-diaminopimelate (DAP), an intermediate involved in the bacterial biosynthesis of lysine and meso-diaminopimelic acid, an essential component of bacterial cell walls. The chain is Succinyl-diaminopimelate desuccinylase from Polynucleobacter necessarius subsp. necessarius (strain STIR1).